Consider the following 295-residue polypeptide: Glycine--tRNA ligase alpha subunit (295 aa).

It belongs to the class-II aminoacyl-tRNA synthetase family. Tetramer of two alpha and two beta subunits.

The protein resides in the cytoplasm. It carries out the reaction tRNA(Gly) + glycine + ATP = glycyl-tRNA(Gly) + AMP + diphosphate. The protein is Glycine--tRNA ligase alpha subunit of Thermosynechococcus vestitus (strain NIES-2133 / IAM M-273 / BP-1).